A 471-amino-acid polypeptide reads, in one-letter code: Coagulation factor IX (471 aa).

Positions 1-19 (MAKIPLILSFCLLEAFLGA) are cleaved as a signal peptide. Positions 20-39 (ESTVFIENKEASTVLSRTRR) are excised as a propeptide. Residues 40-85 (GNSNRLEELIPGNLERECIEEKCSFEEAREVFENTEKTMEFWKIYI) enclose the Gla domain. Ca(2+)-binding residues include Asn-41, Glu-46, Glu-47, Glu-54, Glu-56, Glu-59, Glu-60, Glu-65, Glu-66, and Glu-69. Glu-46, Glu-47, Glu-54, Glu-56, Glu-59, Glu-60, Glu-65, Glu-66, Glu-69, Glu-72, Glu-75, and Glu-79 each carry 4-carboxyglutamate. Glu-54 serves as a coordination point for Mg(2+). Cys-57 and Cys-62 are oxidised to a cystine. Glu-59 is a binding site for Mg(2+). Position 65 (Glu-65) interacts with Mg(2+). Glu-69 is a binding site for Mg(2+). Ca(2+)-binding residues include Glu-75, Glu-79, Asp-86, Gly-87, and Gln-89. Positions 75 and 79 each coordinate Mg(2+). In terms of domain architecture, EGF-like 1; calcium-binding spans 86-122 (DGDQCNSNPCKNGAVCKDGVSSYECMCPPGYGGRNCE). Cystine bridges form between Cys-90–Cys-101, Cys-95–Cys-110, Cys-112–Cys-121, Cys-127–Cys-138, Cys-134–Cys-148, Cys-150–Cys-163, Cys-171–Cys-345, Cys-262–Cys-278, Cys-392–Cys-406, and Cys-417–Cys-445. O-linked (Glc...) serine glycosylation is present at Ser-92. Asp-103 contacts Ca(2+). Asp-103 carries the (3R)-3-hydroxyaspartate modification. Ser-107 is modified (phosphoserine). Residues 123–164 (IDSTCATKNGGCEHFCRHDTPQKAVCSCASGYKLHEDGKSCK) enclose the EGF-like 2 domain. A propeptide spans 186-235 (TENTIERWNITAHDEGDAHDEALDITEPPPPPTTSAAPAKIVPITKNDTR) (activation peptide). The 234-residue stretch at 236-469 (VVGGYDSVKG…YVKWIRETTR (234 aa)) folds into the Peptidase S1 domain. The active-site Charge relay system is His-277. The Ca(2+) site is built by Glu-291, Asn-293, Glu-296, and Glu-301. The active-site Charge relay system is Asp-325. Catalysis depends on Ser-421, which acts as the Charge relay system.

This sequence belongs to the peptidase S1 family. In terms of assembly, heterodimer of a light chain and a heavy chain; disulfide-linked. Activated by factor XIa, which excises the activation peptide. The propeptide can also be removed by snake venom protease. Activated by coagulation factor VIIa-tissue factor (F7-F3) complex in calcium-dependent manner. In terms of processing, the iron and 2-oxoglutarate dependent 3-hydroxylation of aspartate and asparagine is (R) stereospecific within EGF domains.

Its subcellular location is the secreted. It catalyses the reaction Selective cleavage of Arg-|-Ile bond in factor X to form factor Xa.. Its function is as follows. Factor IX is a vitamin K-dependent plasma protein that participates in the intrinsic pathway of blood coagulation by converting factor X to its active form in the presence of Ca(2+) ions, phospholipids, and factor VIIIa. This is Coagulation factor IX (F9) from Gallus gallus (Chicken).